A 209-amino-acid polypeptide reads, in one-letter code: Claudin-4 (209 aa).

The Cytoplasmic segment spans residues Met1–Thr9. The interval Met1–Lys103 is interaction with EPHA2. Residues Gly10 to Trp30 form a helical membrane-spanning segment. The Extracellular portion of the chain corresponds to Arg31–Arg81. Cys54 and Cys64 form a disulfide bridge. A helical membrane pass occupies residues Ala82–Gly102. The Cytoplasmic segment spans residues Lys103–Thr117. A helical transmembrane segment spans residues Met118 to Trp138. Over Thr139 to Met160 the chain is Extracellular. The chain crosses the membrane as a helical span at residues Gly161–Leu181. Residues Cys182–Val209 are Cytoplasmic-facing. The residue at position 208 (Tyr208) is a Phosphotyrosine; by EPHA2. The segment at Tyr208–Val209 is interactions with TJP1, TJP2 and TJP3.

This sequence belongs to the claudin family. In terms of assembly, interacts with EPHA2; phosphorylates CLDN4 and may regulate tight junctions. Directly interacts with TJP1/ZO-1, TJP2/ZO-2 and TJP3/ZO-3. Interacts with CLDN1. Interacts with CLDN8. In terms of processing, phosphorylated. Phosphorylation by EPHA2 is stimulated by EFNA1 and alters interaction with TJP1.

The protein localises to the cell junction. The protein resides in the tight junction. Its subcellular location is the cell membrane. Its function is as follows. Channel-forming tight junction protein that mediates paracellular chloride transport in the kidney. Plays a critical role in the paracellular reabsorption of filtered chloride in the kidney collecting ducts. Claudins play a major role in tight junction-specific obliteration of the intercellular space, through calcium-independent cell-adhesion activity. In Chlorocebus aethiops (Green monkey), this protein is Claudin-4 (CLDN4).